Here is a 461-residue protein sequence, read N- to C-terminus: Coagulation factor IX (461 aa).

Positions 1–28 are cleaved as a signal peptide; sequence MQRVNMIMAESPGLITICLLGYLLSAEC. The propeptide occupies 29–46; that stretch reads TVFLDHENANKILNRPKR. Residues Y47, N48, E53, E54, E61, E63, E66, E67, E72, E73, and E76 each coordinate Ca(2+). The Gla domain maps to 47 to 92; sequence YNSGKLEEFVQGNLERECMEEKCSFEEAREVFENTERTTEFWKQYV. 4-carboxyglutamate occurs at positions 53, 54, 61, 63, 66, 67, 72, 73, 76, 79, and 82. E61 lines the Mg(2+) pocket. Residues C64 and C69 are joined by a disulfide bond. E66 is a binding site for Mg(2+). Mg(2+) is bound at residue E72. Residue E76 participates in Mg(2+) binding. A Ca(2+)-binding site is contributed by E82. E82 contributes to the Mg(2+) binding site. T85 carries an O-linked (GalNAc...) threonine glycan. Ca(2+) is bound by residues E86, D93, G94, and Q96. A 4-carboxyglutamate modification is found at E86. E86 lines the Mg(2+) pocket. The EGF-like 1; calcium-binding domain occupies 93-129; that stretch reads DGDQCESNPCLNGGSCKDDINSYECWCPFGFEGKNCE. 10 disulfide bridges follow: C97–C108, C102–C117, C119–C128, C134–C145, C141–C155, C157–C170, C178–C335, C252–C268, C382–C396, and C407–C435. An O-linked (Glc...) serine glycan is attached at S99. S107 carries an O-linked (Fuc...) serine glycan. Ca(2+) is bound by residues D110 and D111. D110 bears the (3R)-3-hydroxyaspartate mark. S114 carries the phosphoserine modification. In terms of domain architecture, EGF-like 2 spans 130-171; it reads LDVTCNIKNGRCEQFCKNSADNKVVCSCTEGYRLAENQKSCE. Residues 192–226 constitute a propeptide, activation peptide; the sequence is AETVFPDVDYVNSTEAETILDNITQSTQSFNDFTR. Y201 is modified (sulfotyrosine). A glycan (N-linked (GlcNAc...) asparagine) is linked at N203. S204 carries the phosphoserine modification. Phosphothreonine; alternate is present on T205. Residue T205 is glycosylated (O-linked (GalNAc...) threonine; alternate). N-linked (GlcNAc...) asparagine glycosylation is present at N213. T215 and T225 each carry an O-linked (GalNAc...) threonine glycan. Residues 227–459 enclose the Peptidase S1 domain; the sequence is VVGGEDAKPG…YVNWIKEKTK (233 aa). H267 serves as the catalytic Charge relay system. The Ca(2+) site is built by E281, N283, E286, E288, and E291. Catalysis depends on D315, which acts as the Charge relay system. S411 functions as the Charge relay system in the catalytic mechanism.

This sequence belongs to the peptidase S1 family. In terms of assembly, heterodimer of a light chain and a heavy chain; disulfide-linked. Interacts (inactive and activated) with F11 (activated) in calcium-dependent manner. Interacts with SERPINC1. Interacts (activated) with iripin-8, a serine protease inhibitor from Ixodes ricinus saliva. Interacts (inactive and activated) with nitrophorin-2, an anticoagulant protein from Rhodnius prolixus. Post-translationally, activated by factor XIa, which excises the activation peptide. The propeptide can also be removed by snake venom protease. Activated by coagulation factor VIIa-tissue factor (F7-F3) complex in calcium-dependent manner. The iron and 2-oxoglutarate dependent 3-hydroxylation of aspartate and asparagine is (R) stereospecific within EGF domains. As to expression, detected in blood plasma (at protein level). Synthesized primarily in the liver and secreted in plasma.

It is found in the secreted. It carries out the reaction Selective cleavage of Arg-|-Ile bond in factor X to form factor Xa.. In terms of biological role, factor IX is a vitamin K-dependent plasma protein that participates in the intrinsic pathway of blood coagulation by converting factor X to its active form in the presence of Ca(2+) ions, phospholipids, and factor VIIIa. This is Coagulation factor IX (F9) from Homo sapiens (Human).